The sequence spans 271 residues: MRKPVTPPGNPPRPRSPGYGSTSLAPGITAANSNTRISPPTLARPAPAAGAGGQGGNLGLNSDRLRHAMVQRLRTQGIVDERVLNAMAAVPRHLFVDEALASRAYEDAALPIGHSQTISQPWVVARMIAAACEDRNPTRVLEVGAGCGYQAAVLAQFVREVHAIERIRGLFELARGHLRALRLATRVRLIHGDGMLGLPGVAPFDAIVVAAAGLAIPQALLDQLAPGGRLIAPEGASNQRLVLIERTGTASWKRTELEAVRFVPLRAGIQS.

Residues 1 to 15 show a composition bias toward pro residues; that stretch reads MRKPVTPPGNPPRPR. Residues 1–60 form a disordered region; the sequence is MRKPVTPPGNPPRPRSPGYGSTSLAPGITAANSNTRISPPTLARPAPAAGAGGQGGNLGL. The span at 39 to 49 shows a compositional bias: low complexity; that stretch reads PPTLARPAPAA. The active site involves Ser-119.

This sequence belongs to the methyltransferase superfamily. L-isoaspartyl/D-aspartyl protein methyltransferase family.

Its subcellular location is the cytoplasm. The enzyme catalyses [protein]-L-isoaspartate + S-adenosyl-L-methionine = [protein]-L-isoaspartate alpha-methyl ester + S-adenosyl-L-homocysteine. Catalyzes the methyl esterification of L-isoaspartyl residues in peptides and proteins that result from spontaneous decomposition of normal L-aspartyl and L-asparaginyl residues. It plays a role in the repair and/or degradation of damaged proteins. The polypeptide is Protein-L-isoaspartate O-methyltransferase (Bordetella petrii (strain ATCC BAA-461 / DSM 12804 / CCUG 43448)).